We begin with the raw amino-acid sequence, 277 residues long: RsbT co-antagonist protein RsbRB (277 aa).

The STAS domain maps to 165–276 (SSPVITLSKS…TNLAQALNYH (112 aa)). Thr186 is modified (phosphothreonine).

In terms of assembly, interacts with RsbRA and RsbS in the stressosome. The stressosome probably also contains RsbRC and RsbRD. Phosphorylated by RsbT.

In terms of biological role, one of 4 functionally non-identical RsbR paralogs, it functions in the environmental signaling branch of the general stress response. Its function is as follows. Negative regulator of sigma-B activity. Non-phosphorylated RsbS binds to RsbT, preventing its association with RsbU. Requires any one of RsbRA, RsbRB, RsbRC or RsbRD to sequester RsbT. When RsbS and the RsbR paralog(s) are phosphorylated, they release RsbT, which can then bind and activate RsbU. The polypeptide is RsbT co-antagonist protein RsbRB (rsbRB) (Bacillus subtilis (strain 168)).